Here is a 71-residue protein sequence, read N- to C-terminus: Brevinin-1V (71 aa).

A signal peptide spans 1 to 22 (MFTLKKSLLLLFFLGTINLSLC). A propeptide spanning residues 23–45 (EQERDADEEERRDDSEERDIEVE) is cleaved from the precursor. Residues cysteine 65 and cysteine 71 are joined by a disulfide bond.

This sequence belongs to the frog skin active peptide (FSAP) family. Brevinin subfamily. As to expression, expressed by the skin glands.

Its subcellular location is the secreted. Has antimicrobial activity against Gram-positive bacteria and fungi but has weak or no activity against a range of Gram-negative bacteria except P.faecalis. Active against the Gram-positive bacteria E.faecium 091299 (MIC=37.5 uM), S.aureus ATCC 25923 (MIC=2.4 uM), S.carnosus KHS (MIC=19 uM), B.licheniformis X39 (MIC=2.4 uM) and R.rhodochrous X15 (MIC=1.2 uM) and a lower activity against E.faecalis 981 (MIC=75 uM). Active against the Gram-negative bacterium P.faecalis X29 (MIC=9.5 uM) is virtually inactive against E.coli ATCC 25922 (MIC=150 uM), and inactive against P.aeruginosa and S.typhi. Has antifungal activity against C.albicans ATCC 2002 (MIC=9.5 uM) and is also active against the slime mold 090223 (MIC=1.2 uM). Has low hemolytic activity against human erythrocytes (LC(50)=75 uM). This chain is Brevinin-1V, found in Odorrana hainanensis (Odor frog).